Reading from the N-terminus, the 351-residue chain is Foldase protein PrsA 1 (351 aa).

The signal sequence occupies residues 1-22 (MKNSNKLIASVVTLASVMALAA). Cys-23 is lipidated: N-palmitoyl cysteine. Cys-23 is lipidated: S-diacylglycerol cysteine. In terms of domain architecture, PpiC spans 145 to 240 (TPTMAVEMIT…KKFYIVKVTK (96 aa)). Low complexity-rich tracts occupy residues 303-317 (KTKA…SESS) and 326-351 (ESEQ…PAAQ). Residues 303–351 (KTKAASESSTTSESSKAAEENPSESEQTQTSSAEEPTETEAQTQEPAAQ) form a disordered region.

Belongs to the PrsA family.

It localises to the cell membrane. The catalysed reaction is [protein]-peptidylproline (omega=180) = [protein]-peptidylproline (omega=0). In terms of biological role, plays a major role in protein secretion by helping the post-translocational extracellular folding of several secreted proteins. The sequence is that of Foldase protein PrsA 1 from Streptococcus pyogenes serotype M6 (strain ATCC BAA-946 / MGAS10394).